Consider the following 272-residue polypeptide: Protein STAY-GREEN 1, chloroplastic (272 aa).

Residues 1–50 constitute a chloroplast transit peptide; that stretch reads MGTLTTSLVVPSKLNNEQQSSIFIHKTRRKCKKNQSIVPVARLFGPAIFE. The tract at residues 201–222 is disordered; it reads TSPSSSSGGVGGVKSTSFTSNS.

The protein belongs to the staygreen family. As to quaternary structure, interacts with PSY1.

It is found in the plastid. The protein localises to the chloroplast. Required to trigger chlorophyll degradation during leaf senescence and fruit ripening. Binds directly PSY1 to regulate the accumulation of lycopene and beta-carotene in the maturing fruits. The sequence is that of Protein STAY-GREEN 1, chloroplastic from Solanum lycopersicum (Tomato).